A 164-amino-acid chain; its full sequence is Decoration protein (164 aa).

The tract at residues 1-72 (MIDYSGLRTI…AIPPAPPAPP (72 aa)) is binding to the capsid hexamer. The Ig-like domain maps to 71–164 (PPLTLSKDLT…VTVNPTVPGG (94 aa)).

In terms of assembly, interacts with the major capsid protein; each hexon binds a single copy of the decoration protein.

The protein resides in the virion. Decoration protein that binds asymmetrically to the center of each capsid protein hexamer after capsid expansion. Stabilizes the capsid and protects from DNA release. This chain is Decoration protein, found in Escherichia phage T5 (Enterobacteria phage T5).